A 517-amino-acid polypeptide reads, in one-letter code: MRQSSTLTWTSVLLAPLAASKGLIADYASCQSACVSLSSQLSVESVGNYIAEFEQQPIAGAGVEAGSLYWSQQQQALRPACLVHAREAQDVALVVQTSRSTGCPFAVRGGGHSDIPGFSNSHGGITVNMAGLGDVKVDASAGVARIGAGAKWGAVFKELDKTNKTVVGGRLTGVGVGGLLLGGGLSHLSGLHGLACDNVRNYEIVLANGSIFDVSHSTHPDLYRALRGGGNNFGVVTRFDLDLYDQGPMWGGLHVWPLLPSVTSAITSAFAEFGHEAPSDKHVSLFAGLGFMQGNFAWAVGQYDTLGREEPPIFSKFRDDAETYGAPKLVKTARVTSLSDLAEELNLSEPAGMRSRFTTATFRMDVDLLQLMAGYFVEEVERALENGLREDKRFAPMLGIQPLTKNILRAQSKRGGNVMGLDEESGPLIVCSFGWEWFRETDDAVVIAGIKSVLEKSVAAAKEKGLYHPFKYMNYAAEDQDPIASYGAENVEFLKKVRHTYDSDGLFMKLVPGGHKI.

A signal peptide spans 1 to 19 (MRQSSTLTWTSVLLAPLAA). The FAD-binding PCMH-type domain maps to 75 to 246 (QALRPACLVH…TRFDLDLYDQ (172 aa)). His112 is subject to Pros-8alpha-FAD histidine. Residues Asn163, Asn208, and Asn346 are each glycosylated (N-linked (GlcNAc...) asparagine).

Belongs to the oxygen-dependent FAD-linked oxidoreductase family. FAD serves as cofactor.

It functions in the pathway secondary metabolite biosynthesis; terpenoid biosynthesis. Its function is as follows. FAD-dependent monooxygenase; part of the gene cluster that mediates the biosynthesis of the mycotoxin fusaproliferin (FUP) that belongs to the class of bicyclic sesterterpenoids. FUP4 catalyzes the oxidation of the hydroxy group at the C-16 position of preterpestacin III to a keto group, leading to the formation of (-)-terpestacin. The product of FUP1, preterpestacin I, might also serve as a substrate of FUP4 to yield oxo-preterpestacin I. The FUP biosynthetic pathway starts with the enzyme encoded by FUP1 that combines a C-terminal prenyltransferase domain responsible for the synthesis of geranylgeranyl diphosphate with the N-terminal terpene cyclase domain, to yield preterpestacin I. Preterpestacin I is then decorated by oxygenation steps that are catalyzed by two cytochrome P450 monooxygenases. First, FUP2 introduces a hydroxyl group at the C-24 position resulting in the formation of preterpestacin IIa. The second P450 monooxygenase catalyzes the hydroxylation at C-16 and C-17 of preterpestacin IIa, producing preterpestacin III. Subsequently, the FAD-dependent oxidoreductase FUP4 catalyzes the oxidation of the hydroxy group at the C-16 position to a keto group, leading to the formation of (-)-terpestacin, which is the immediate precursor of FUP. The final step in the proposed biosynthetic pathway is the addition of an acetyl group at the C-24 position of terpestacin, which is catalyzed by the acetyltransferase FUP5. In Fusarium proliferatum (strain ET1) (Orchid endophyte fungus), this protein is FAD-dependent monooxygenase FUP4.